We begin with the raw amino-acid sequence, 398 residues long: 1-deoxy-D-xylulose 5-phosphate reductoisomerase (398 aa).

Positions 10, 11, 12, 13, 38, and 124 each coordinate NADPH. Lys-125 is a 1-deoxy-D-xylulose 5-phosphate binding site. Glu-126 provides a ligand contact to NADPH. Asp-150 contacts Mn(2+). Residues Ser-151, Glu-152, Ser-176, and His-199 each contribute to the 1-deoxy-D-xylulose 5-phosphate site. Glu-152 is a binding site for Mn(2+). Gly-205 is an NADPH binding site. 1-deoxy-D-xylulose 5-phosphate is bound by residues Ser-212, Asn-217, Lys-218, and Glu-221. Glu-221 contacts Mn(2+).

It belongs to the DXR family. Mg(2+) is required as a cofactor. Requires Mn(2+) as cofactor.

It carries out the reaction 2-C-methyl-D-erythritol 4-phosphate + NADP(+) = 1-deoxy-D-xylulose 5-phosphate + NADPH + H(+). Its pathway is isoprenoid biosynthesis; isopentenyl diphosphate biosynthesis via DXP pathway; isopentenyl diphosphate from 1-deoxy-D-xylulose 5-phosphate: step 1/6. Functionally, catalyzes the NADPH-dependent rearrangement and reduction of 1-deoxy-D-xylulose-5-phosphate (DXP) to 2-C-methyl-D-erythritol 4-phosphate (MEP). The chain is 1-deoxy-D-xylulose 5-phosphate reductoisomerase from Crocosphaera subtropica (strain ATCC 51142 / BH68) (Cyanothece sp. (strain ATCC 51142)).